Here is a 391-residue protein sequence, read N- to C-terminus: Zinc finger protein ubi-d4 (391 aa).

Position 2 is an N-acetylalanine (A2). Residues K10, K99, K107, and K108 each participate in a glycyl lysine isopeptide (Lys-Gly) (interchain with G-Cter in SUMO2) cross-link. Disordered stretches follow at residues 79–147 and 165–199; these read WRKK…GEFP and DDLD…KLDA. Basic and acidic residues-rich tracts occupy residues 100–110 and 126–140; these read PDTDQTLKKEG and DPLE…RVDD. A Phosphoserine modification is found at S142. The segment covering 165 to 174 has biased composition (acidic residues); that stretch reads DDLDDEDYEE. The residue at position 172 (Y172) is a Phosphotyrosine. Residue T176 is modified to Phosphothreonine. Residues K178 and K196 each participate in a glycyl lysine isopeptide (Lys-Gly) (interchain with G-Cter in SUMO2) cross-link. A Phosphoserine modification is found at S200. Residues 209–232 form a C2H2-type zinc finger; that stretch reads YACDICGKRYKNRPGLSYHYAHSH. The tract at residues 233 to 266 is disordered; it reads LAEEEGEDKEDSRPPTPVSQRSEEQKSKKGPDGL. S244 is subject to Phosphoserine. The segment covering 253 to 263 has biased composition (basic and acidic residues); that stretch reads RSEEQKSKKGP. 2 PHD-type zinc fingers span residues 270–330 and 327–377; these read NNYC…CKCC and CKCC…CLDL. The residue at position 280 (S280) is a Phosphoserine. K281 participates in a covalent cross-link: Glycyl lysine isopeptide (Lys-Gly) (interchain with G-Cter in SUMO2).

This sequence belongs to the requiem/DPF family. Interacts with the nucleosomes, in particular nucleosomes bearing histone H3 crotonylated at 'Lys-14' (H3K14cr) for which DPF2 has high affinity. Also interacts (via PHD-type zinc finger domains) with histone H3 butyrylated at 'Lys-14' (H3K14bu), histone H3 propionylated at 'Lys-14' (H3K14pr), and histone H3 acetylated at 'Lys-14' (H3K14ac). Interacts with histone H3 acetylated at 'Lys-9' (H3K9ac), histone H3 di-methylated at 'Lys-9' (H3K9me2), and histone H3 tri-methylated at 'Lys-9' (H3K9me3). Interacts with histone H4 acetylated at 'Lys-12' (H4K12ac). Interacts with histone H4 acetylated at 'Lys-16' (H4K16ac). Interacts with SWI/SNF complex components. Interacts with SMARCA2, SMARCA4, SMARCB1 and SMARCD1. Interacts with SMARCC1, SMARCC2 and ACTL6A. Interacts with RUNX1. In terms of tissue distribution, in embryo, highest levels are seen in brain, eyes, thymus and olfactory epithelium in nose, whereas several other tissues, including the musculoskeletal system, show moderate expression. In adult, higher expression in testis, medium in thymus and spleen, lower in certain parts of the brain as the hippocampus. No expression in adult heart, lung, liver, duodenum and kidney.

It is found in the nucleus. The protein localises to the cytoplasm. Its function is as follows. Plays an active role in transcriptional regulation by binding modified histones H3 and H4. Is a negative regulator of myeloid differentiation of hematopoietic progenitor cells. Might also have a role in the development and maturation of lymphoid cells. Involved in the regulation of non-canonical NF-kappa-B pathway. The protein is Zinc finger protein ubi-d4 (Dpf2) of Mus musculus (Mouse).